The sequence spans 469 residues: 3-isopropylmalate dehydratase large subunit (469 aa).

Residues Cys-347, Cys-407, and Cys-410 each coordinate [4Fe-4S] cluster.

This sequence belongs to the aconitase/IPM isomerase family. LeuC type 1 subfamily. As to quaternary structure, heterodimer of LeuC and LeuD. [4Fe-4S] cluster serves as cofactor.

It carries out the reaction (2R,3S)-3-isopropylmalate = (2S)-2-isopropylmalate. The protein operates within amino-acid biosynthesis; L-leucine biosynthesis; L-leucine from 3-methyl-2-oxobutanoate: step 2/4. Its function is as follows. Catalyzes the isomerization between 2-isopropylmalate and 3-isopropylmalate, via the formation of 2-isopropylmaleate. The chain is 3-isopropylmalate dehydratase large subunit from Sorangium cellulosum (strain So ce56) (Polyangium cellulosum (strain So ce56)).